The following is a 691-amino-acid chain: DNA ligase (691 aa).

Residues 56-60 (DRAYD), 104-105 (SI), and Glu139 contribute to the NAD(+) site. Lys141 serves as the catalytic N6-AMP-lysine intermediate. NAD(+) contacts are provided by Arg162, Glu198, Lys314, and Lys338. Zn(2+) is bound by residues Cys429, Cys432, Cys445, and Cys451. Residues 607–691 (TAGDALSGQT…SLLESHGIEI (85 aa)) enclose the BRCT domain.

This sequence belongs to the NAD-dependent DNA ligase family. LigA subfamily. The cofactor is Mg(2+). Mn(2+) serves as cofactor.

It catalyses the reaction NAD(+) + (deoxyribonucleotide)n-3'-hydroxyl + 5'-phospho-(deoxyribonucleotide)m = (deoxyribonucleotide)n+m + AMP + beta-nicotinamide D-nucleotide.. Its function is as follows. DNA ligase that catalyzes the formation of phosphodiester linkages between 5'-phosphoryl and 3'-hydroxyl groups in double-stranded DNA using NAD as a coenzyme and as the energy source for the reaction. It is essential for DNA replication and repair of damaged DNA. This Natronomonas pharaonis (strain ATCC 35678 / DSM 2160 / CIP 103997 / JCM 8858 / NBRC 14720 / NCIMB 2260 / Gabara) (Halobacterium pharaonis) protein is DNA ligase.